A 1938-amino-acid chain; its full sequence is tRNA (32-2'-O)-methyltransferase regulator THADA (1938 aa).

Residues glutamate 877 to phenylalanine 909 are a coiled coil. A phosphoserine mark is found at serine 1006, serine 1015, and serine 1152.

Belongs to the THADA family.

Functionally, together with methyltransferase FTSJ1, methylates the 2'-O-ribose of nucleotides at position 32 of the anticodon loop of substrate tRNAs. This chain is tRNA (32-2'-O)-methyltransferase regulator THADA (Thada), found in Mus musculus (Mouse).